The primary structure comprises 413 residues: Transcription factor bHLH23 (413 aa).

The interval 40 to 75 is disordered; the sequence is SSQTQTPSCDPPLILRGSGSGDGEGNGPLPQPPPPL. Residue threonine 186 is modified to Phosphothreonine. A Phosphoserine modification is found at serine 191. Disordered regions lie at residues 232–278 and 391–413; these read TEPV…RSRA and ETEQ…KMFS. Residues 246-257 show a composition bias toward basic and acidic residues; the sequence is TDERKRKTREET. The bHLH domain maps to 277–326; that stretch reads RAAIMHKLSERRRRQKINEMMKALQELLPRCTKTDRSSMLDDVIEYVKSL.

As to quaternary structure, homodimer. As to expression, expressed constitutively in leaves, stems, and flowers.

Its subcellular location is the nucleus. This is Transcription factor bHLH23 (BHLH23) from Arabidopsis thaliana (Mouse-ear cress).